A 385-amino-acid chain; its full sequence is Leucine aminopeptidase 1 (385 aa).

The first 19 residues, 1-19 (MKFPSFLSLGIAASTTALA), serve as a signal peptide directing secretion. Positions 20-87 (ALPDQKPIGD…FPRAFAKTAV (68 aa)) are excised as a propeptide. N-linked (GlcNAc...) asparagine glycosylation is present at asparagine 177. Zn(2+) contacts are provided by histidine 185 and aspartate 204. Residue asparagine 229 is glycosylated (N-linked (GlcNAc...) asparagine). Residues glutamate 243 and aspartate 270 each coordinate Zn(2+). Residues cysteine 319 and cysteine 323 are joined by a disulfide bond. Position 352 (histidine 352) interacts with Zn(2+).

Belongs to the peptidase M28 family. M28E subfamily. Monomer. Zn(2+) serves as cofactor.

Its subcellular location is the secreted. Functionally, extracellular aminopeptidase that allows assimilation of proteinaceous substrates. The sequence is that of Leucine aminopeptidase 1 (LAP1) from Blastomyces gilchristii (strain SLH14081) (Blastomyces dermatitidis).